The sequence spans 320 residues: Malate dehydrogenase (320 aa).

Residues 10 to 15 (GSGMIG) and Asp34 each bind NAD(+). Positions 83 and 89 each coordinate substrate. NAD(+) is bound by residues Asn96 and 119–121 (ITN). Residues Asn121 and Arg152 each coordinate substrate. His176 serves as the catalytic Proton acceptor.

Belongs to the LDH/MDH superfamily. MDH type 3 family.

It carries out the reaction (S)-malate + NAD(+) = oxaloacetate + NADH + H(+). In terms of biological role, catalyzes the reversible oxidation of malate to oxaloacetate. In Allorhizobium ampelinum (strain ATCC BAA-846 / DSM 112012 / S4) (Agrobacterium vitis (strain S4)), this protein is Malate dehydrogenase.